The chain runs to 376 residues: Chaperone protein DnaJ (376 aa).

The J domain maps to aspartate 5–glycine 70. A CR-type zinc finger spans residues glycine 132–serine 210. Zn(2+)-binding residues include cysteine 145, cysteine 148, cysteine 162, cysteine 165, cysteine 184, cysteine 187, cysteine 198, and cysteine 201. CXXCXGXG motif repeat units follow at residues cysteine 145 to glycine 152, cysteine 162 to glycine 169, cysteine 184 to glycine 191, and cysteine 198 to glycine 205.

Belongs to the DnaJ family. As to quaternary structure, homodimer. Zn(2+) is required as a cofactor.

It localises to the cytoplasm. Participates actively in the response to hyperosmotic and heat shock by preventing the aggregation of stress-denatured proteins and by disaggregating proteins, also in an autonomous, DnaK-independent fashion. Unfolded proteins bind initially to DnaJ; upon interaction with the DnaJ-bound protein, DnaK hydrolyzes its bound ATP, resulting in the formation of a stable complex. GrpE releases ADP from DnaK; ATP binding to DnaK triggers the release of the substrate protein, thus completing the reaction cycle. Several rounds of ATP-dependent interactions between DnaJ, DnaK and GrpE are required for fully efficient folding. Also involved, together with DnaK and GrpE, in the DNA replication of plasmids through activation of initiation proteins. The polypeptide is Chaperone protein DnaJ (Shewanella halifaxensis (strain HAW-EB4)).